Consider the following 82-residue polypeptide: Cytochrome c oxidase subunit 8, mitochondrial (82 aa).

The transit peptide at 1-31 (MFSRVALRAAPRQQPFSLVARRTFQTTRAQL) directs the protein to the mitochondrion. The Mitochondrial matrix portion of the chain corresponds to 32–52 (SSPYHYPEGPRSNLPFNPKTR). The chain crosses the membrane as a helical span at residues 53–75 (FFWFRYLMYCVVGFGSPVAIAVW). The Mitochondrial intermembrane portion of the chain corresponds to 76-82 (QTYRPRS).

Belongs to the cytochrome c oxidase VIIc family. Component of the cytochrome c oxidase (complex IV, CIV), a multisubunit enzyme composed of 11 subunits. The complex is composed of a catalytic core of 3 subunits Cox1, Cox2 and Cox3, encoded in the mitochondrial DNA, and 8 supernumerary subunits Cox4, Cox5a/Cox5, Cox6, Cox7, Cox8, Cox7a/Cox9, Cox6b/Cox12 and Cox6a/Cox13, which are encoded in the nuclear genome. The complex exists as a monomer or a dimer and forms respiratory supercomplexes (SCs) in the inner mitochondrial membrane with NADH-ubiquinone oxidoreductase (complex I, CI) and ubiquinol-cytochrome c oxidoreductase (cytochrome b-c1 complex, complex III, CIII), resulting in various different assemblies (supercomplexes I(1)IV(1), I(1)III(3)IV(2), III(2)IV(1) and III(2)IV(2) as well as larger supercomplexes of compositions like I(1)III(2)IV(5-6)).

The protein localises to the mitochondrion inner membrane. It participates in energy metabolism; oxidative phosphorylation. Component of the cytochrome c oxidase, the last enzyme in the mitochondrial electron transport chain which drives oxidative phosphorylation. The respiratory chain contains 3 multisubunit complexes succinate dehydrogenase (complex II, CII), ubiquinol-cytochrome c oxidoreductase (cytochrome b-c1 complex, complex III, CIII) and cytochrome c oxidase (complex IV, CIV), that cooperate to transfer electrons derived from NADH and succinate to molecular oxygen, creating an electrochemical gradient over the inner membrane that drives transmembrane transport and the ATP synthase. Cytochrome c oxidase is the component of the respiratory chain that catalyzes the reduction of oxygen to water. Electrons originating from reduced cytochrome c in the intermembrane space (IMS) are transferred via the dinuclear copper A center (CU(A)) of Cox2 and heme A of Cox1 to the active site in Cox1, a binuclear center (BNC) formed by heme A3 and copper B (CU(B)). The BNC reduces molecular oxygen to 2 water molecules using 4 electrons from cytochrome c in the IMS and 4 protons from the mitochondrial matrix. This Neurospora crassa (strain ATCC 24698 / 74-OR23-1A / CBS 708.71 / DSM 1257 / FGSC 987) protein is Cytochrome c oxidase subunit 8, mitochondrial (cox-15).